Consider the following 627-residue polypeptide: Interferon-induced GTP-binding protein MxB (627 aa).

One can recognise a Dynamin-type G domain in the interval 34–307; sequence DLALPAIAVI…LVHHIQRSLP (274 aa). A G1 motif region spans residues 44-51; it reads GDQSSGKS. 44–51 is a GTP binding site; the sequence is GDQSSGKS. Positions 69-71 are G2 motif; sequence VTR. The tract at residues 145-148 is G3 motif; the sequence is DLPG. GTP contacts are provided by residues 145–149 and 214–217; these read DLPGI and TKPD. Residues 214–217 form a G4 motif region; sequence TKPD. The G5 motif stretch occupies residues 246 to 249; it reads RCRG. Residues 541 to 627 enclose the GED domain; the sequence is LSEMKLHLES…MKAQNLLATY (87 aa).

The protein belongs to the TRAFAC class dynamin-like GTPase superfamily. Dynamin/Fzo/YdjA family.

It localises to the cytoplasm. The polypeptide is Interferon-induced GTP-binding protein MxB (mxb) (Danio rerio (Zebrafish)).